The following is a 445-amino-acid chain: Phosphoglucosamine mutase (445 aa).

Catalysis depends on Ser99, which acts as the Phosphoserine intermediate. Mg(2+) contacts are provided by Ser99, Asp242, Asp244, and Asp246. Residue Ser99 is modified to Phosphoserine.

Belongs to the phosphohexose mutase family. Mg(2+) serves as cofactor. In terms of processing, activated by phosphorylation.

It catalyses the reaction alpha-D-glucosamine 1-phosphate = D-glucosamine 6-phosphate. Functionally, catalyzes the conversion of glucosamine-6-phosphate to glucosamine-1-phosphate. The polypeptide is Phosphoglucosamine mutase (Campylobacter jejuni subsp. jejuni serotype O:23/36 (strain 81-176)).